The primary structure comprises 309 residues: Glutaminase (309 aa).

Substrate is bound by residues serine 64, asparagine 114, glutamate 160, asparagine 167, tyrosine 191, tyrosine 243, and valine 261.

It belongs to the glutaminase family. In terms of assembly, homotetramer.

The catalysed reaction is L-glutamine + H2O = L-glutamate + NH4(+). This is Glutaminase from Methylobacterium nodulans (strain LMG 21967 / CNCM I-2342 / ORS 2060).